Reading from the N-terminus, the 355-residue chain is Tetraacyldisaccharide 4'-kinase (355 aa).

49–56 provides a ligand contact to ATP; it reads TAGGTGKT.

The protein belongs to the LpxK family.

It catalyses the reaction a lipid A disaccharide + ATP = a lipid IVA + ADP + H(+). It functions in the pathway glycolipid biosynthesis; lipid IV(A) biosynthesis; lipid IV(A) from (3R)-3-hydroxytetradecanoyl-[acyl-carrier-protein] and UDP-N-acetyl-alpha-D-glucosamine: step 6/6. Functionally, transfers the gamma-phosphate of ATP to the 4'-position of a tetraacyldisaccharide 1-phosphate intermediate (termed DS-1-P) to form tetraacyldisaccharide 1,4'-bis-phosphate (lipid IVA). This is Tetraacyldisaccharide 4'-kinase from Chlorobium luteolum (strain DSM 273 / BCRC 81028 / 2530) (Pelodictyon luteolum).